We begin with the raw amino-acid sequence, 623 residues long: DNA-directed RNA polymerase subunit gamma (623 aa).

4 residues coordinate Zn(2+): C70, C72, C85, and C88. The Mg(2+) site is built by D466, D468, and D470.

This sequence belongs to the RNA polymerase beta' chain family. RpoC1 subfamily. In cyanobacteria the RNAP catalytic core is composed of 2 alpha, 1 beta, 1 beta', 1 gamma and 1 omega subunit. When a sigma factor is associated with the core the holoenzyme is formed, which can initiate transcription. Requires Mg(2+) as cofactor. The cofactor is Zn(2+).

It catalyses the reaction RNA(n) + a ribonucleoside 5'-triphosphate = RNA(n+1) + diphosphate. Its function is as follows. DNA-dependent RNA polymerase catalyzes the transcription of DNA into RNA using the four ribonucleoside triphosphates as substrates. The protein is DNA-directed RNA polymerase subunit gamma of Acaryochloris marina (strain MBIC 11017).